The primary structure comprises 277 residues: Pristinamycin IIA synthase subunit B (277 aa).

Heterodimer of two subunits, SnaA and SnaB. It depends on FMN as a cofactor.

Its function is as follows. Catalyzes the oxidation of the proline residue of pristinamycin IIB (PIIB) to pristinamycin IIA (PIIA). The sequence is that of Pristinamycin IIA synthase subunit B (snaB) from Streptomyces pristinaespiralis.